A 448-amino-acid chain; its full sequence is Histidinol dehydrogenase (448 aa).

3 residues coordinate NAD(+): Y136, Q197, and N220. Residues S243, Q265, and H268 each coordinate substrate. Zn(2+)-binding residues include Q265 and H268. Residues E333 and H334 each act as proton acceptor in the active site. Substrate contacts are provided by H334, D367, E421, and H426. D367 contributes to the Zn(2+) binding site. H426 is a binding site for Zn(2+).

This sequence belongs to the histidinol dehydrogenase family. Zn(2+) serves as cofactor.

It catalyses the reaction L-histidinol + 2 NAD(+) + H2O = L-histidine + 2 NADH + 3 H(+). Its pathway is amino-acid biosynthesis; L-histidine biosynthesis; L-histidine from 5-phospho-alpha-D-ribose 1-diphosphate: step 9/9. Catalyzes the sequential NAD-dependent oxidations of L-histidinol to L-histidinaldehyde and then to L-histidine. The chain is Histidinol dehydrogenase from Pseudomonas syringae pv. syringae (strain B728a).